The sequence spans 89 residues: Small ribosomal subunit protein uS15 (89 aa).

The protein belongs to the universal ribosomal protein uS15 family. In terms of assembly, part of the 30S ribosomal subunit. Forms a bridge to the 50S subunit in the 70S ribosome, contacting the 23S rRNA.

In terms of biological role, one of the primary rRNA binding proteins, it binds directly to 16S rRNA where it helps nucleate assembly of the platform of the 30S subunit by binding and bridging several RNA helices of the 16S rRNA. Forms an intersubunit bridge (bridge B4) with the 23S rRNA of the 50S subunit in the ribosome. In Chlamydia pneumoniae (Chlamydophila pneumoniae), this protein is Small ribosomal subunit protein uS15.